A 589-amino-acid chain; its full sequence is Class I diterpene synthase 2, chloroplastic (589 aa).

Residues D328, D332, N472, T476, and E480 each coordinate Mg(2+). The DDXXD motif motif lies at 328-332; the sequence is DDFFD.

It belongs to the terpene synthase family. The cofactor is Mg(2+). In terms of tissue distribution, mostly expressed in trichomes of leaves and fruits.

It is found in the plastid. The protein resides in the chloroplast. The enzyme catalyses 9alpha-copalyl diphosphate + H2O = (13S)-vitexifolin A + diphosphate. It catalyses the reaction peregrinol diphosphate = (13R)-9,13-epoxylabd-14-ene + diphosphate. It carries out the reaction peregrinol diphosphate + H2O = viteagnusin D + diphosphate. It functions in the pathway secondary metabolite biosynthesis; terpenoid biosynthesis. In terms of biological role, involved in the biosynthesis of labdane-type diterpenoid including cleroda-dienols, and peregrinol lactones and furan derivatives, dopaminergic diterpenoids that can bind to dopamine receptors in the human pituitary gland, have probably ability to lower prolactin levels, and are used to treat menstrual cycle disorders (e.g. premenstrual syndrome and mastodynia). Terpene synthase the catalyzes the conversion of peregrinol diphosphate to viteagnusin D and 9,13(R)-epoxy-labd-14-ene, and of syn-copalyl diphosophate to vitexifolin A. The sequence is that of Class I diterpene synthase 2, chloroplastic from Vitex agnus-castus (Chaste tree).